We begin with the raw amino-acid sequence, 106 residues long: Large ribosomal subunit protein uL24 (106 aa).

It belongs to the universal ribosomal protein uL24 family. Part of the 50S ribosomal subunit.

One of two assembly initiator proteins, it binds directly to the 5'-end of the 23S rRNA, where it nucleates assembly of the 50S subunit. In terms of biological role, one of the proteins that surrounds the polypeptide exit tunnel on the outside of the subunit. In Thermosipho melanesiensis (strain DSM 12029 / CIP 104789 / BI429), this protein is Large ribosomal subunit protein uL24.